A 280-amino-acid polypeptide reads, in one-letter code: Tryptophan synthase alpha chain (280 aa).

Residues glutamate 50 and aspartate 61 each act as proton acceptor in the active site.

The protein belongs to the TrpA family. As to quaternary structure, tetramer of two alpha and two beta chains.

It catalyses the reaction (1S,2R)-1-C-(indol-3-yl)glycerol 3-phosphate + L-serine = D-glyceraldehyde 3-phosphate + L-tryptophan + H2O. It participates in amino-acid biosynthesis; L-tryptophan biosynthesis; L-tryptophan from chorismate: step 5/5. Functionally, the alpha subunit is responsible for the aldol cleavage of indoleglycerol phosphate to indole and glyceraldehyde 3-phosphate. The chain is Tryptophan synthase alpha chain from Methylorubrum extorquens (strain PA1) (Methylobacterium extorquens).